The sequence spans 116 residues: MAGRLLANLIVMGSGIIGRAVFQAYRQALANASKSGVAQEAMQNGVRQAGKAITEQEARQILGVTEKTSWEEILQKYDKLFENNAKAGSFYLQSKVHRAKECLEVVYRSQGNGTPS.

A mitochondrion-targeting transit peptide spans Met-1 to Gln-27. Positions Glu-57 to Val-106 are J-like.

The protein belongs to the TIM16/PAM16 family. Expressed constitutively and ubiquitously, except in root tips, at low levels.

It is found in the mitochondrion inner membrane. It localises to the cytoplasm. Its function is as follows. Regulates ATP-dependent protein translocation into the mitochondrial matrix. Involved in the uptake of thaxtomin, a phytotoxin produced by Streptomyces bacteria, that causes dramatic cell swelling, reduced seedling growth, and inhibition of cellulose synthesis. Modulates polar auxin transport. Involved in importing a negative regulator of plant immunity into mitochondria, thus protecting plants from over-accumulation of reactive oxygen species (ROS) and preventing autoimmunity. Confers sensitivity to virulent pathogens such as the oomycete H.arabidopsidis Noco2 and the bacteria P.syringae pv. maculicola ES4326. The chain is Mitochondrial import inner membrane translocase subunit PAM16 like 2 from Arabidopsis thaliana (Mouse-ear cress).